Here is a 126-residue protein sequence, read N- to C-terminus: SGSCTVKTCWMRLPTFRTVGDFLKDRFDGASRVIYGNKGSNRASRVELHHLEPENPAHKPPSPVDLVYFEKSPNFCTYSGKTGTVGTAGRSCNSSSPALDGCELLCCGRGYRTRMQRVTERCNCTF.

The O-palmitoleoyl serine; by PORCN moiety is linked to residue serine 1. Cysteines 92 and 107 form a disulfide. Residues asparagine 93 and asparagine 123 are each glycosylated (N-linked (GlcNAc...) asparagine).

The protein belongs to the Wnt family. Palmitoleoylation is required for efficient binding to frizzled receptors. Palmitoleoylation is necessary for proper trafficking to cell surface. Depalmitoleoylated by NOTUM, leading to inhibit Wnt signaling pathway.

Its subcellular location is the secreted. It localises to the extracellular space. The protein localises to the extracellular matrix. Its function is as follows. Ligand for members of the frizzled family of seven transmembrane receptors. Acts in the canonical Wnt signaling pathway by promoting beta-catenin-dependent transcriptional activation. Plays an essential role in the development of the embryonic brain and central nervous system (CNS). Has a role in osteoblast function, bone development and bone homeostasis. In Sceloporus occidentalis (Western fence lizard), this protein is Protein Wnt-1 (WNT-1).